The chain runs to 459 residues: Protein phosphatase 1M (459 aa).

The segment covering 1-10 (MSAGWFRRRF) has biased composition (basic residues). The tract at residues 1-64 (MSAGWFRRRF…SRPVRSPARG (64 aa)) is disordered. Residues 14–27 (EPLPAPRPPGPHAS) show a composition bias toward pro residues. Positions 38-48 (RGSSSSPGAAD) are enriched in low complexity. Residues aspartate 125 and glycine 126 each contribute to the Mn(2+) site. The PPM-type phosphatase domain maps to 162–459 (MHLNGRCICP…HSQGQESSDH (298 aa)).

Belongs to the PP2C family. Mg(2+) is required as a cofactor. Mn(2+) serves as cofactor.

The protein localises to the nucleus. It catalyses the reaction O-phospho-L-seryl-[protein] + H2O = L-seryl-[protein] + phosphate. The catalysed reaction is O-phospho-L-threonyl-[protein] + H2O = L-threonyl-[protein] + phosphate. The polypeptide is Protein phosphatase 1M (PPM1M) (Homo sapiens (Human)).